A 207-amino-acid polypeptide reads, in one-letter code: Probable nicotinate-nucleotide adenylyltransferase (207 aa).

Belongs to the NadD family.

The enzyme catalyses nicotinate beta-D-ribonucleotide + ATP + H(+) = deamido-NAD(+) + diphosphate. Its pathway is cofactor biosynthesis; NAD(+) biosynthesis; deamido-NAD(+) from nicotinate D-ribonucleotide: step 1/1. In terms of biological role, catalyzes the reversible adenylation of nicotinate mononucleotide (NaMN) to nicotinic acid adenine dinucleotide (NaAD). This chain is Probable nicotinate-nucleotide adenylyltransferase, found in Synechococcus sp. (strain JA-3-3Ab) (Cyanobacteria bacterium Yellowstone A-Prime).